Here is a 293-residue protein sequence, read N- to C-terminus: Thiamine-monophosphate kinase (293 aa).

Mg(2+)-binding residues include Glu-25, Val-39, Asp-40, Asp-68, and Asp-113. ATP is bound by residues 112–113 and Arg-136; that span reads GD. Mg(2+) is bound at residue Asp-194. Ser-196 is a binding site for ATP. Asp-197 serves as a coordination point for Mg(2+). Glu-243 and Trp-286 together coordinate substrate.

This sequence belongs to the thiamine-monophosphate kinase family. Homodimer.

It carries out the reaction thiamine phosphate + ATP = thiamine diphosphate + ADP. Its pathway is cofactor biosynthesis; thiamine diphosphate biosynthesis; thiamine diphosphate from thiamine phosphate: step 1/1. With respect to regulation, is inhibited by AMP; the mode of AMP inhibition is uncompetitive for both TMP and ATP. Functionally, catalyzes the ATP-dependent phosphorylation of thiamine-monophosphate (TMP) to form thiamine-pyrophosphate (TPP), the active form of vitamin B1. The protein is Thiamine-monophosphate kinase of Pyrobaculum calidifontis (strain DSM 21063 / JCM 11548 / VA1).